Here is an 801-residue protein sequence, read N- to C-terminus: Endonuclease MutS2 (801 aa).

Glycine 336 to threonine 343 provides a ligand contact to ATP. The interval alanine 696 to threonine 721 is disordered. A compositionally biased stretch (basic residues) spans alanine 701 to lysine 710. One can recognise a Smr domain in the interval leucine 726–serine 801.

Belongs to the DNA mismatch repair MutS family. MutS2 subfamily. In terms of assembly, homodimer. Binds to stalled ribosomes, contacting rRNA.

Functionally, endonuclease that is involved in the suppression of homologous recombination and thus may have a key role in the control of bacterial genetic diversity. Its function is as follows. Acts as a ribosome collision sensor, splitting the ribosome into its 2 subunits. Detects stalled/collided 70S ribosomes which it binds and splits by an ATP-hydrolysis driven conformational change. Acts upstream of the ribosome quality control system (RQC), a ribosome-associated complex that mediates the extraction of incompletely synthesized nascent chains from stalled ribosomes and their subsequent degradation. Probably generates substrates for RQC. The chain is Endonuclease MutS2 from Leuconostoc citreum (strain KM20).